Consider the following 63-residue polypeptide: Large ribosomal subunit protein uL29 (63 aa).

The protein belongs to the universal ribosomal protein uL29 family.

This Yersinia enterocolitica serotype O:8 / biotype 1B (strain NCTC 13174 / 8081) protein is Large ribosomal subunit protein uL29.